A 378-amino-acid chain; its full sequence is Succinyl-diaminopimelate desuccinylase (378 aa).

Residue His-67 participates in Zn(2+) binding. The active site involves Asp-69. Position 100 (Asp-100) interacts with Zn(2+). The Proton acceptor role is filled by Glu-134. Zn(2+)-binding residues include Glu-135, Glu-163, and His-349.

Belongs to the peptidase M20A family. DapE subfamily. In terms of assembly, homodimer. The cofactor is Zn(2+). Co(2+) is required as a cofactor.

The enzyme catalyses N-succinyl-(2S,6S)-2,6-diaminopimelate + H2O = (2S,6S)-2,6-diaminopimelate + succinate. Its pathway is amino-acid biosynthesis; L-lysine biosynthesis via DAP pathway; LL-2,6-diaminopimelate from (S)-tetrahydrodipicolinate (succinylase route): step 3/3. In terms of biological role, catalyzes the hydrolysis of N-succinyl-L,L-diaminopimelic acid (SDAP), forming succinate and LL-2,6-diaminopimelate (DAP), an intermediate involved in the bacterial biosynthesis of lysine and meso-diaminopimelic acid, an essential component of bacterial cell walls. The protein is Succinyl-diaminopimelate desuccinylase of Pasteurella multocida (strain Pm70).